A 338-amino-acid polypeptide reads, in one-letter code: Plasminogen (338 aa).

The Kringle 5 domain maps to 9-88 (CMLGIGKGYQ…LFDYCDVPQC (80 aa)). 9 cysteine pairs are disulfide-bonded: Cys9–Cys88, Cys30–Cys71, Cys59–Cys83, Cys95–Cys213, Cys105–Cys113, Cys135–Cys151, Cys227–Cys294, Cys257–Cys273, and Cys284–Cys312. The 228-residue stretch at 109-336 (IVGGCVAIAH…FINWIERIMQ (228 aa)) folds into the Peptidase S1 domain. Ser125 carries the post-translational modification Phosphoserine. Active-site charge relay system residues include His150 and Asp193. The active-site Charge relay system is the Ser288.

This sequence belongs to the peptidase S1 family. Plasminogen subfamily. As to quaternary structure, interacts with CSPG4 and AMOT. Interacts (via the Kringle domains) with HRG; the interaction tethers PLG to the cell surface and enhances its activation. Interacts (via Kringle 4 domain) with ADA; the interaction stimulates PLG activation when in complex with DPP4. Angiostatin: Interacts with ATP5F1A; the interaction inhibits most of the angiogenic effects of angiostatin.

It is found in the secreted. It carries out the reaction Preferential cleavage: Lys-|-Xaa &gt; Arg-|-Xaa, higher selectivity than trypsin. Converts fibrin into soluble products.. With respect to regulation, converted into plasmin by plasminogen activators, both plasminogen and its activator being bound to fibrin. Activated with catalytic amounts of streptokinase. Its function is as follows. Plasmin dissolves the fibrin of blood clots and acts as a proteolytic factor in a variety of other processes including embryonic development, tissue remodeling, tumor invasion, and inflammation. In ovulation, weakens the walls of the Graafian follicle. It activates the urokinase-type plasminogen activator, collagenases and several complement zymogens, such as C1, C4 and C5. Cleavage of fibronectin and laminin leads to cell detachment and apoptosis. Also cleaves fibrin, thrombospondin and von Willebrand factor. Its role in tissue remodeling and tumor invasion may be modulated by CSPG4. Binds to cells. The polypeptide is Plasminogen (PLG) (Equus caballus (Horse)).